The chain runs to 406 residues: NADH-quinone oxidoreductase subunit D (406 aa).

Belongs to the complex I 49 kDa subunit family. As to quaternary structure, NDH-1 is composed of 14 different subunits. Subunits NuoB, C, D, E, F, and G constitute the peripheral sector of the complex.

It is found in the cell inner membrane. The enzyme catalyses a quinone + NADH + 5 H(+)(in) = a quinol + NAD(+) + 4 H(+)(out). Its function is as follows. NDH-1 shuttles electrons from NADH, via FMN and iron-sulfur (Fe-S) centers, to quinones in the respiratory chain. The immediate electron acceptor for the enzyme in this species is believed to be ubiquinone. Couples the redox reaction to proton translocation (for every two electrons transferred, four hydrogen ions are translocated across the cytoplasmic membrane), and thus conserves the redox energy in a proton gradient. In Rhizorhabdus wittichii (strain DSM 6014 / CCUG 31198 / JCM 15750 / NBRC 105917 / EY 4224 / RW1) (Sphingomonas wittichii), this protein is NADH-quinone oxidoreductase subunit D.